A 238-amino-acid polypeptide reads, in one-letter code: Ribosomal RNA large subunit methyltransferase E (238 aa).

5 residues coordinate S-adenosyl-L-methionine: Gly-85, Trp-87, Asp-113, Asp-129, and Asp-153. The Proton acceptor role is filled by Lys-193.

The protein belongs to the class I-like SAM-binding methyltransferase superfamily. RNA methyltransferase RlmE family.

The protein localises to the cytoplasm. The catalysed reaction is uridine(2552) in 23S rRNA + S-adenosyl-L-methionine = 2'-O-methyluridine(2552) in 23S rRNA + S-adenosyl-L-homocysteine + H(+). Specifically methylates the uridine in position 2552 of 23S rRNA at the 2'-O position of the ribose in the fully assembled 50S ribosomal subunit. The polypeptide is Ribosomal RNA large subunit methyltransferase E (Ruegeria sp. (strain TM1040) (Silicibacter sp.)).